The primary structure comprises 52 residues: Creatine kinase B-type (52 aa).

Residues 1–52 form the Phosphagen kinase C-terminal domain; the sequence is AKVLTLDLYKKLRDKSTPSGFTLDDIIQNEHLGYVLTCPSNLGTXLRAXVHV. The Phosphagen kinase N-terminal domain occupies 1 to 52; sequence AKVLTLDLYKKLRDKSTPSGFTLDDIIQNEHLGYVLTCPSNLGTXLRAXVHV. Arginine 13 and arginine 47 together coordinate ATP.

The protein belongs to the ATP:guanido phosphotransferase family. As to quaternary structure, dimer of identical or non-identical chains, which can be either B (brain type) or M (muscle type). With MM being the major form in skeletal muscle and myocardium, MB existing in myocardium, and BB existing in many tissues, especially brain. Expressed in rectal gland, brain, skeletal muscle (at protein level).

It localises to the cytoplasm. It is found in the cytosol. The protein localises to the mitochondrion. The protein resides in the basal cell membrane. The enzyme catalyses creatine + ATP = N-phosphocreatine + ADP + H(+). Reversibly catalyzes the transfer of phosphate between ATP and various phosphogens (e.g. creatine phosphate). Creatine kinase isoenzymes play a central role in energy transduction in tissues with large, fluctuating energy demands, such as skeletal muscle, heart, brain and spermatozoa. In Squalus acanthias (Spiny dogfish), this protein is Creatine kinase B-type.